The sequence spans 286 residues: MQTIPDALFGIIGYPVSHSVSPAMQNAAFKHCKLNYLYLTIAAKPEDLQNVIASMRPLNIRGLNVTIPHKIEVIKYIDTLDPAAKKIGAVNTIVNENGQMKGYNTDFGGFVRLLEHNRIAPAKHRFALLGAGGSAHAISLAICTLGGHLTVLARQEEKAKDLAAKMCLRFKGKAQGLELNEANLEETLAESDIIVNCTPIGMGNLAGQSLISPRLLRPDLTVIDAIYNPCKTRLLEDAEKKGAKIINGLEMLVWQGAMSFEIWTSQKAPFRVMMKEAEMALDENEK.

Shikimate-binding positions include 19–21 and threonine 66; that span reads SVS. Lysine 70 acts as the Proton acceptor in catalysis. Positions 91 and 106 each coordinate shikimate. Residues 130 to 134 and alanine 225 contribute to the NADP(+) site; that span reads GAGGS. Tyrosine 227 is a shikimate binding site. Glycine 248 is a binding site for NADP(+).

It belongs to the shikimate dehydrogenase family. As to quaternary structure, homodimer.

It carries out the reaction shikimate + NADP(+) = 3-dehydroshikimate + NADPH + H(+). The protein operates within metabolic intermediate biosynthesis; chorismate biosynthesis; chorismate from D-erythrose 4-phosphate and phosphoenolpyruvate: step 4/7. Involved in the biosynthesis of the chorismate, which leads to the biosynthesis of aromatic amino acids. Catalyzes the reversible NADPH linked reduction of 3-dehydroshikimate (DHSA) to yield shikimate (SA). The chain is Shikimate dehydrogenase (NADP(+)) from Dehalococcoides mccartyi (strain ATCC BAA-2100 / JCM 16839 / KCTC 5957 / BAV1).